Here is a 473-residue protein sequence, read N- to C-terminus: Pre-mRNA-splicing factor prp5 (473 aa).

7 WD repeats span residues 161–191, 203–233, 245–275, 287–317, 329–358, 370–399, and 419–449; these read GHLG…KIWD, GHIA…KCWD, GHLS…RVWD, GHKS…RLWD, HHKK…KHWK, GHNA…CFWD, and DSEA…KIYK.

This sequence belongs to the WD repeat PRL1/PRL2 family. In terms of assembly, belongs to the 40S cdc5-associated complex (or cwf complex), a spliceosome sub-complex reminiscent of a late-stage spliceosome composed of the U2, U5 and U6 snRNAs and at least brr2, cdc5, cwf2/prp3, cwf3/syf1, cwf4/syf3, cwf5/ecm2, spp42/cwf6, cwf7/spf27, cwf8, cwf9, cwf10, cwf11, cwf12, prp45/cwf13, cwf14, cwf15, cwf16, cwf17, cwf18, cwf19, cwf20, cwf21, cwf22, cwf23, cwf24, cwf25, cwf26, cyp7/cwf27, cwf28, cwf29/ist3, lea1, msl1, prp5/cwf1, prp10, prp12/sap130, prp17, prp22, sap61, sap62, sap114, sap145, slu7, smb1, smd1, smd3, smf1, smg1 and syf2.

The protein resides in the nucleus. Functionally, required for both cell cycle progression at G2/M and pre-mRNA splicing. Interacts genetically with the PRP4 kinase. The polypeptide is Pre-mRNA-splicing factor prp5 (prp5) (Schizosaccharomyces pombe (strain 972 / ATCC 24843) (Fission yeast)).